Reading from the N-terminus, the 695-residue chain is Elongation factor G (695 aa).

The tr-type G domain maps to 8–282; it reads KDTRNIGIMA…AIVDYMPAPI (275 aa). GTP contacts are provided by residues 17-24, 81-85, and 135-138; these read AHIDAGKT, DTPGH, and NKMD. The segment at 285–304 is disordered; it reads PDIKGVDPQTDEPTTRKSSD.

The protein belongs to the TRAFAC class translation factor GTPase superfamily. Classic translation factor GTPase family. EF-G/EF-2 subfamily.

The protein resides in the cytoplasm. In terms of biological role, catalyzes the GTP-dependent ribosomal translocation step during translation elongation. During this step, the ribosome changes from the pre-translocational (PRE) to the post-translocational (POST) state as the newly formed A-site-bound peptidyl-tRNA and P-site-bound deacylated tRNA move to the P and E sites, respectively. Catalyzes the coordinated movement of the two tRNA molecules, the mRNA and conformational changes in the ribosome. This Finegoldia magna (strain ATCC 29328 / DSM 20472 / WAL 2508) (Peptostreptococcus magnus) protein is Elongation factor G.